A 788-amino-acid chain; its full sequence is Spastin (788 aa).

Residues 1-105 form a disordered region; it reads MVRTKNQSSS…PRSAGGPSSV (105 aa). At 1–116 the chain is on the cytoplasmic side; that stretch reads MVRTKNQSSS…KQNLYVVSFP (116 aa). Residues 1–227 form a required for localization to punctate cytoplasmic foci region; that stretch reads MVRTKNQSSS…NRSGSGYSPG (227 aa). 2 stretches are compositionally biased toward low complexity: residues 8 to 48 and 57 to 75; these read SSSS…SSHR and ATNV…SSPD. Residues 117–137 constitute an intramembrane region (helical); sequence IIFLFNVLRSLIYQLFCIFRY. At 138 to 788 the chain is on the cytoplasmic side; that stretch reads LYGASTKVIY…WSSDYGDITI (651 aa). Residues 227 to 788 form a sufficient for interaction with microtubules and microtubule severing region; that stretch reads GPGDPLLAKQ…WSSDYGDITI (562 aa). The 76-residue stretch at 240 to 315 folds into the MIT domain; sequence HRRAFEYISK…SMARDRLHFL (76 aa). The segment covering 331 to 353 has biased composition (basic and acidic residues); sequence EKQKANESREQQQKPQKAREAAD. Residues 331–484 are disordered; that stretch reads EKQKANESRE…SGSGSGASTP (154 aa). Positions 387–400 are enriched in low complexity; sequence ATATTPTSSSSLAS. 2 stretches are compositionally biased toward polar residues: residues 419 to 433 and 453 to 469; these read NKSQ…SKTS and QFSS…RTPI. The required for interaction with microtubules stretch occupies residues 471–485; sequence NNGASGSGSGASTPV. ATP is bound at residue 553–560; the sequence is GPPGNGKT.

The protein belongs to the AAA ATPase family. Spastin subfamily. In terms of assembly, homohexamer. The homohexamer is stabilized by ATP-binding. The homohexamer may adopt a ring conformation through which microtubules pass prior to being severed. Interacts with microtubules. Interacts with atl; may be involved in microtubule dynamics.

The protein resides in the membrane. It localises to the cytoplasm. It is found in the cytoskeleton. The protein localises to the microtubule organizing center. Its subcellular location is the centrosome. The protein resides in the chromosome. It localises to the lipid droplet. It carries out the reaction n ATP + n H2O + a microtubule = n ADP + n phosphate + (n+1) alpha/beta tubulin heterodimers.. ATP-dependent microtubule severing protein. Stimulates microtubule minus-end depolymerization and poleward microtubule flux in the mitotic spindle. Regulates microtubule stability in the neuromuscular junction synapse. Involved in lipid metabolism by regulating the size and distribution of lipid droplets. Involved in axon regeneration by regulating microtubule severing. In Drosophila persimilis (Fruit fly), this protein is Spastin.